A 193-amino-acid polypeptide reads, in one-letter code: Proteasome subunit beta 1 (193 aa).

A propeptide spans 1–4 (MPGA) (removed in mature form; by autocatalysis). Thr5 serves as the catalytic Nucleophile.

The protein belongs to the peptidase T1B family. The 20S proteasome core is composed of 14 alpha and 14 beta subunits that assemble into four stacked heptameric rings, resulting in a barrel-shaped structure. The two inner rings, each composed of seven catalytic beta subunits, are sandwiched by two outer rings, each composed of seven alpha subunits. The catalytic chamber with the active sites is on the inside of the barrel. Has a gated structure, the ends of the cylinder being occluded by the N-termini of the alpha-subunits. Is capped at one or both ends by the proteasome regulatory ATPase, PAN.

Its subcellular location is the cytoplasm. The enzyme catalyses Cleavage of peptide bonds with very broad specificity.. Its activity is regulated as follows. The formation of the proteasomal ATPase PAN-20S proteasome complex, via the docking of the C-termini of PAN into the intersubunit pockets in the alpha-rings, triggers opening of the gate for substrate entry. Interconversion between the open-gate and close-gate conformations leads to a dynamic regulation of the 20S proteasome proteolysis activity. Its function is as follows. Component of the proteasome core, a large protease complex with broad specificity involved in protein degradation. This Cenarchaeum symbiosum (strain A) protein is Proteasome subunit beta 1.